A 689-amino-acid chain; its full sequence is Glycine--tRNA ligase beta subunit (689 aa).

It belongs to the class-II aminoacyl-tRNA synthetase family. In terms of assembly, tetramer of two alpha and two beta subunits.

Its subcellular location is the cytoplasm. The catalysed reaction is tRNA(Gly) + glycine + ATP = glycyl-tRNA(Gly) + AMP + diphosphate. The chain is Glycine--tRNA ligase beta subunit from Photorhabdus laumondii subsp. laumondii (strain DSM 15139 / CIP 105565 / TT01) (Photorhabdus luminescens subsp. laumondii).